A 314-amino-acid chain; its full sequence is Small ribosomal subunit protein uS2 (314 aa).

Composition is skewed to basic and acidic residues over residues 244–265 (GGHDERREQEDRDAASERGHKD) and 271–287 (DRRGGPRERREPREDRA). The tract at residues 244–314 (GGHDERREQE…AAPEAAPAKE (71 aa)) is disordered. Residues 302 to 314 (APAAAPEAAPAKE) are compositionally biased toward low complexity.

The protein belongs to the universal ribosomal protein uS2 family.

The sequence is that of Small ribosomal subunit protein uS2 from Anaeromyxobacter dehalogenans (strain 2CP-C).